Reading from the N-terminus, the 302-residue chain is Sulfate adenylyltransferase subunit 2 (302 aa).

This sequence belongs to the PAPS reductase family. CysD subfamily. In terms of assembly, heterodimer composed of CysD, the smaller subunit, and CysN.

The enzyme catalyses sulfate + ATP + H(+) = adenosine 5'-phosphosulfate + diphosphate. The protein operates within sulfur metabolism; hydrogen sulfide biosynthesis; sulfite from sulfate: step 1/3. With CysN forms the ATP sulfurylase (ATPS) that catalyzes the adenylation of sulfate producing adenosine 5'-phosphosulfate (APS) and diphosphate, the first enzymatic step in sulfur assimilation pathway. APS synthesis involves the formation of a high-energy phosphoric-sulfuric acid anhydride bond driven by GTP hydrolysis by CysN coupled to ATP hydrolysis by CysD. This chain is Sulfate adenylyltransferase subunit 2, found in Sodalis glossinidius (strain morsitans).